The following is a 378-amino-acid chain: Cytochrome b (378 aa).

4 consecutive transmembrane segments (helical) span residues 34 to 54 (FGSL…FLSM), 78 to 100 (WLLR…CHIG), 113 to 133 (TWNV…VGYV), and 179 to 199 (FFSF…VHLL). Heme b-binding residues include His-84 and His-98. His-183 and His-197 together coordinate heme b. His-202 lines the a ubiquinone pocket. 4 consecutive transmembrane segments (helical) span residues 225 to 245 (YSTK…IVVL), 289 to 306 (LGGV…FCLP), 313 to 342 (KFRS…WIGM), and 350 to 369 (IFIG…LNPL).

This sequence belongs to the cytochrome b family. The main subunits of complex b-c1 are: cytochrome b, cytochrome c1 and the Rieske protein. Heme b is required as a cofactor.

It is found in the mitochondrion inner membrane. Functionally, component of the ubiquinol-cytochrome c reductase complex (complex III or cytochrome b-c1 complex) that is part of the mitochondrial respiratory chain. The b-c1 complex mediates electron transfer from ubiquinol to cytochrome c. Contributes to the generation of a proton gradient across the mitochondrial membrane that is then used for ATP synthesis. The sequence is that of Cytochrome b (mt:Cyt-b) from Loxocorone allax (Goblet worm).